We begin with the raw amino-acid sequence, 130 residues long: Ribosome-binding factor A (130 aa).

It belongs to the RbfA family. In terms of assembly, monomer. Binds 30S ribosomal subunits, but not 50S ribosomal subunits or 70S ribosomes.

It localises to the cytoplasm. One of several proteins that assist in the late maturation steps of the functional core of the 30S ribosomal subunit. Associates with free 30S ribosomal subunits (but not with 30S subunits that are part of 70S ribosomes or polysomes). Required for efficient processing of 16S rRNA. May interact with the 5'-terminal helix region of 16S rRNA. The protein is Ribosome-binding factor A of Roseiflexus sp. (strain RS-1).